The following is a 148-amino-acid chain: Low molecular weight protein-tyrosine-phosphatase Etp (148 aa).

Residue cysteine 13 is the Nucleophile of the active site. Residue arginine 19 is part of the active site. Aspartate 119 functions as the Proton donor in the catalytic mechanism.

Belongs to the low molecular weight phosphotyrosine protein phosphatase family.

It carries out the reaction O-phospho-L-tyrosyl-[protein] + H2O = L-tyrosyl-[protein] + phosphate. Dephosphorylates etk. This chain is Low molecular weight protein-tyrosine-phosphatase Etp (etp), found in Escherichia coli O157:H7.